A 1142-amino-acid polypeptide reads, in one-letter code: MANIAALEPFVGKEDPVELFELIEEIAEGSFGTVYKGKHLPTGNIMAVKIIALDEDETFEDLVVEIDILNRCNHNNIVKYYGSWVKGDELFIAMECCGGGSITEIYQELNIPLNESQIAYVCRETLKGLEYLHHTNVIHRDLKGANILLTESGDVKLADFGVSGLLDKSSKRNTFIGTPYWMAPEVIENRSNPVPYDTKADIWSLGITLIELAEAEPPLSEIHPMKVLFQIPYRDPPKLKNQENYSKDFINFIQSCLQKDPNQRKTATELLKHPFVTNTKEKAVLTDLITKYRKFRAAELEEGGDEDEDSSEQEGMDSDDKDSDLKKSVGTSDRKSTLIANGSTSSLSPPASPSQRKSTGQNLQLPQIIEQQSSSSSSSSSSSLSSQSLQPQAVNKSTDRLSANINGSNTKSNTIDKKTTAAASASASSLNLSTGNLQQSLSGSGSITTNSGVGNGTSGKPTTNGKSSDDRSPDIRTNRKAGRPVTIRKTLEKRNDAVKKIVNAKLMKQQLKDIKKQQQKQQEEEEQLLKQQQKEKDDLLKQNAAKATQQQKQSAAKEEKIQKQHKVEKETLSRQQKADREQLLKKNQSDCSKQRTKVTDQQKQQQREFKDQQKQQQKQKEHEFKDQNKVLDKSTPKKLSKHIAIHQKVIREQEICVQDLVFQQKQDFQKLVDDHQNATQNLFLENKQQSEQLFAWHTQQNQQFQFQQQCQLENYQEYHTVLRENMNAEHQLAKSQLEHSHLSETNHLKERQVTETEQHIKQMTTEQRNSLKEFKLKQTQDFKEFLNKLKKELKDEKGNKKQLQQQHKEQKKQFELTLSTQEVDFQKKQARQKEEEDDILLTHQKESFKRLQDKQQNIIRDIEEHCKLQRQQFETEYTFNEEEMLIEHYRQKKALLKQQHSEQKQIYQEQTQLQYRLLQEQHKESPALLTDQHLKQKESIEEQQKERLTLQQEEHRIQQESLKKQEQKKKGSVTDLPASLASMQLEQSKQLQLLSEQLQAELATMFERHTKETQSLQAELAKAQEKLQSDQQKLLHDLTEEQKKSKLKLKSESPSCKENPLHMKKKSTGTTPPSTSSNQKTLNNSNGASSNGHHHHHHQSAGVGGSGGTISSSHNTPVLPHNMKHQRSFSTSLPSFKFDNQD.

One can recognise a Protein kinase domain in the interval 20–276 (FELIEEIAEG…ATELLKHPFV (257 aa)). ATP-binding positions include 26–34 (IAEGSFGTV) and K49. Catalysis depends on D141, which acts as the Proton acceptor. Positions 300–322 (LEEGGDEDEDSSEQEGMDSDDKD) are enriched in acidic residues. Disordered regions lie at residues 300-492 (LEEG…KTLE), 515-636 (KKQQ…KSTP), 744-768 (ETNH…TEQR), 939-974 (SIEE…GSVT), and 1040-1142 (EEQK…DNQD). Residues 323–336 (SDLKKSVGTSDRKS) show a composition bias toward basic and acidic residues. Residues 355 to 365 (QRKSTGQNLQL) show a composition bias toward polar residues. Low complexity predominate over residues 371–390 (QQSSSSSSSSSSSLSSQSLQ). Positions 391 to 413 (PQAVNKSTDRLSANINGSNTKSN) are enriched in polar residues. Over residues 421–452 (AAASASASSLNLSTGNLQQSLSGSGSITTNSG) the composition is skewed to low complexity. The segment covering 467 to 477 (SSDDRSPDIRT) has biased composition (basic and acidic residues). Over residues 541–554 (KQNAAKATQQQKQS) the composition is skewed to low complexity. 4 stretches are compositionally biased toward basic and acidic residues: residues 555-588 (AAKE…KKNQ), 597-635 (KVTD…DKST), 744-760 (ETNH…EQHI), and 939-969 (SIEE…EQKK). Residues 716 to 1050 (QEYHTVLREN…EQKKSKLKLK (335 aa)) adopt a coiled-coil conformation. The segment covering 1068-1091 (TGTTPPSTSSNQKTLNNSNGASSN) has biased composition (low complexity).

This sequence belongs to the protein kinase superfamily. STE Ser/Thr protein kinase family. STE20 subfamily. It depends on Mg(2+) as a cofactor.

It catalyses the reaction L-seryl-[protein] + ATP = O-phospho-L-seryl-[protein] + ADP + H(+). The enzyme catalyses L-threonyl-[protein] + ATP = O-phospho-L-threonyl-[protein] + ADP + H(+). This is Serine/threonine-protein kinase dst2 from Dictyostelium discoideum (Social amoeba).